Consider the following 154-residue polypeptide: Myoglobin (154 aa).

One can recognise a Globin domain in the interval 2 to 148 (GLSDGEWQLV…FRNDMAAKYK (147 aa)). At Ser4 the chain carries Phosphoserine. Residue His65 coordinates nitrite. His65 is an O2 binding site. Thr68 bears the Phosphothreonine mark. A heme b-binding site is contributed by His94.

It belongs to the globin family. As to quaternary structure, monomeric.

Its subcellular location is the cytoplasm. It localises to the sarcoplasm. The enzyme catalyses Fe(III)-heme b-[protein] + nitric oxide + H2O = Fe(II)-heme b-[protein] + nitrite + 2 H(+). The catalysed reaction is H2O2 + AH2 = A + 2 H2O. In terms of biological role, monomeric heme protein which primary function is to store oxygen and facilitate its diffusion within muscle tissues. Reversibly binds oxygen through a pentacoordinated heme iron and enables its timely and efficient release as needed during periods of heightened demand. Depending on the oxidative conditions of tissues and cells, and in addition to its ability to bind oxygen, it also has a nitrite reductase activity whereby it regulates the production of bioactive nitric oxide. Under stress conditions, like hypoxia and anoxia, it also protects cells against reactive oxygen species thanks to its pseudoperoxidase activity. The protein is Myoglobin (MB) of Callithrix jacchus (White-tufted-ear marmoset).